The primary structure comprises 205 residues: Protein N-terminal glutamine amidohydrolase (205 aa).

Residues C20, H74, and D90 contribute to the active site.

Belongs to the NTAQ1 family. Monomer.

The enzyme catalyses N-terminal L-glutaminyl-[protein] + H2O = N-terminal L-glutamyl-[protein] + NH4(+). Mediates the side-chain deamidation of N-terminal glutamine residues to glutamate, an important step in N-end rule pathway of protein degradation. Conversion of the resulting N-terminal glutamine to glutamate renders the protein susceptible to arginylation, polyubiquitination and degradation as specified by the N-end rule. Does not act on substrates with internal or C-terminal glutamine and does not act on non-glutamine residues in any position. The polypeptide is Protein N-terminal glutamine amidohydrolase (tun) (Drosophila mojavensis (Fruit fly)).